The primary structure comprises 313 residues: Dioxygenase swnH2 (313 aa).

3 residues coordinate Fe cation: histidine 155, aspartate 157, and histidine 232.

Belongs to the PhyH family. As to quaternary structure, homodimer. The cofactor is Fe cation.

The protein operates within mycotoxin biosynthesis. Its function is as follows. Aminotransferase; part of the gene cluster that mediates the biosynthesis of swainsonine (SW), a cytotoxic fungal alkaloid and a potential cancer therapy drug. Swainsonine production occurs via a multibranched pathway and is dispensable for fungal colonization of plants and infection of insect hosts. The first step of swainsonine biosynthesis is the production of the precursor pipecolic acid (PA) via conversion of L-lysine (Lys) to 1-piperideine-6-carboxylate (P6C) by the aminotransferase swnA, the latter being further reduced to PA by the reductase swnR. The PKS-NRPS hybrid synthetase swnK uptakes and condensates PA and malonyl-CoA with and without skipping of the ketoreductase (KR) domain in order to produce 3 intermediates, 1-oxoindolizidine, (1S)-1-hydroxyindolizin, and (1R)-1-hydroxyindolizine; with the transisomer (1S)-1-hydroxyindolizin being predominant. The terminal thioester reductase (TE) domain of swnK is involved in reduction of the thioester bond to release the intermediate aldehydes. The oxidoreductase swnN could contribute to the reduction of 1-oxoindolizidine to (1S)-1-hydroxyindolizin and (1R)-1-hydroxyindolizine, contributing to the major route of SW production. The dioxygenase swnH2 would be responsible for the oxidization of (1R)-1-hydroxyindolizine into (1R,2S)-1,2-dihydroxyindolizine and of (1S)-1-hydroxyindolizin to yield both (1R,2S)-1,2-dihydroxyindolizine and (1S,2S)-1,2-dihydroxyindolizine. The dioxygenase swnH1 then performs the conversion of the 1,2-dihydroxyindolizine epimers to SW. The chain is Dioxygenase swnH2 from Arthroderma benhamiae (strain ATCC MYA-4681 / CBS 112371) (Trichophyton mentagrophytes).